A 277-amino-acid polypeptide reads, in one-letter code: MTKTELKPILVFDSGIGGLTVLREARVLMPERHFIYVADDAGFPYGGWEEGALKERVIALFGRLLAELDPEICIIACNTAFTLVGADLRAAYPQMTFVGTVPAIKPAAERTRSGLVSVLATPGTVKRAYTRDLIQSFASQCHVRLVGSENLARMAEAYIRGDALADEAVLAEIEPCFVEAEGKRTDIVVLACTHYPFMSNVFRRLAPWPVDWLDPAEAIARRARSLVPLPNGFEPLNGEDPAIFTSGRPDFATRRLMQGFGLRVMADAVSADRRERI.

Residues 13 to 14 (DS) and 45 to 46 (YG) contribute to the substrate site. Cysteine 77 functions as the Proton donor/acceptor in the catalytic mechanism. A substrate-binding site is contributed by 78–79 (NT). The active-site Proton donor/acceptor is the cysteine 192. 193-194 (TH) contributes to the substrate binding site.

Belongs to the aspartate/glutamate racemases family.

It carries out the reaction L-glutamate = D-glutamate. It functions in the pathway cell wall biogenesis; peptidoglycan biosynthesis. Its function is as follows. Provides the (R)-glutamate required for cell wall biosynthesis. The chain is Glutamate racemase from Rhizobium meliloti (strain 1021) (Ensifer meliloti).